Consider the following 345-residue polypeptide: S-adenosylmethionine:tRNA ribosyltransferase-isomerase (345 aa).

This sequence belongs to the QueA family. Monomer.

It is found in the cytoplasm. The enzyme catalyses 7-aminomethyl-7-carbaguanosine(34) in tRNA + S-adenosyl-L-methionine = epoxyqueuosine(34) in tRNA + adenine + L-methionine + 2 H(+). It functions in the pathway tRNA modification; tRNA-queuosine biosynthesis. Functionally, transfers and isomerizes the ribose moiety from AdoMet to the 7-aminomethyl group of 7-deazaguanine (preQ1-tRNA) to give epoxyqueuosine (oQ-tRNA). The protein is S-adenosylmethionine:tRNA ribosyltransferase-isomerase of Shewanella loihica (strain ATCC BAA-1088 / PV-4).